Here is a 335-residue protein sequence, read N- to C-terminus: MADERIVSAENDDFAEASIEKTLRPQVLAQYIGQDRVKNELAVYIEAAKKREESLDHVLLYGPPGLGKTTLAMVIANELQVQIRTTSGPAIERPGDLVALLNELQPGDVLFIDEIHRLPKMVEELLYSAMEDFYIDIVVGQGPTAHPVHFPLPPFTLIGATTRAGLLSAPLRDRFGIVEHMAYYTEADLMDIVQRSAGVFNMSIVPDGALEIARRSRGTPRIANRLLKRTRDYAQVADQNTIDQAIADHALSQLQVDIRGLDGVDRKILQMMIDYYQGGPVGLKTIAANIGEENETIEEVYEPYLLQIGFLKRTQRGRMVTPAGYAHLGMPYPEK.

Residues 2-184 are large ATPase domain (RuvB-L); the sequence is ADERIVSAEN…FGIVEHMAYY (183 aa). ATP-binding positions include Leu23, Arg24, Gly65, Lys68, Thr69, Thr70, 131–133, Arg174, Tyr184, and Arg221; that span reads EDF. Residue Thr69 coordinates Mg(2+). Residues 185-255 form a small ATPAse domain (RuvB-S) region; it reads TEADLMDIVQ…IADHALSQLQ (71 aa). A head domain (RuvB-H) region spans residues 258–335; the sequence is IRGLDGVDRK…AHLGMPYPEK (78 aa). Positions 313 and 318 each coordinate DNA.

It belongs to the RuvB family. Homohexamer. Forms an RuvA(8)-RuvB(12)-Holliday junction (HJ) complex. HJ DNA is sandwiched between 2 RuvA tetramers; dsDNA enters through RuvA and exits via RuvB. An RuvB hexamer assembles on each DNA strand where it exits the tetramer. Each RuvB hexamer is contacted by two RuvA subunits (via domain III) on 2 adjacent RuvB subunits; this complex drives branch migration. In the full resolvosome a probable DNA-RuvA(4)-RuvB(12)-RuvC(2) complex forms which resolves the HJ.

Its subcellular location is the cytoplasm. It catalyses the reaction ATP + H2O = ADP + phosphate + H(+). Functionally, the RuvA-RuvB-RuvC complex processes Holliday junction (HJ) DNA during genetic recombination and DNA repair, while the RuvA-RuvB complex plays an important role in the rescue of blocked DNA replication forks via replication fork reversal (RFR). RuvA specifically binds to HJ cruciform DNA, conferring on it an open structure. The RuvB hexamer acts as an ATP-dependent pump, pulling dsDNA into and through the RuvAB complex. RuvB forms 2 homohexamers on either side of HJ DNA bound by 1 or 2 RuvA tetramers; 4 subunits per hexamer contact DNA at a time. Coordinated motions by a converter formed by DNA-disengaged RuvB subunits stimulates ATP hydrolysis and nucleotide exchange. Immobilization of the converter enables RuvB to convert the ATP-contained energy into a lever motion, pulling 2 nucleotides of DNA out of the RuvA tetramer per ATP hydrolyzed, thus driving DNA branch migration. The RuvB motors rotate together with the DNA substrate, which together with the progressing nucleotide cycle form the mechanistic basis for DNA recombination by continuous HJ branch migration. Branch migration allows RuvC to scan DNA until it finds its consensus sequence, where it cleaves and resolves cruciform DNA. The sequence is that of Holliday junction branch migration complex subunit RuvB from Latilactobacillus sakei subsp. sakei (strain 23K) (Lactobacillus sakei subsp. sakei).